Consider the following 168-residue polypeptide: NADH-quinone oxidoreductase subunit I (168 aa).

4Fe-4S ferredoxin-type domains follow at residues 58–88 and 99–128; these read LRTY…IEAQ and VRYD…EGPN. [4Fe-4S] cluster-binding residues include Cys68, Cys71, Cys74, Cys78, Cys108, Cys111, Cys114, and Cys118.

This sequence belongs to the complex I 23 kDa subunit family. NDH-1 is composed of 14 different subunits. Subunits NuoA, H, J, K, L, M, N constitute the membrane sector of the complex. [4Fe-4S] cluster serves as cofactor.

The protein resides in the cell inner membrane. It catalyses the reaction a quinone + NADH + 5 H(+)(in) = a quinol + NAD(+) + 4 H(+)(out). NDH-1 shuttles electrons from NADH, via FMN and iron-sulfur (Fe-S) centers, to quinones in the respiratory chain. The immediate electron acceptor for the enzyme in this species is believed to be ubiquinone. Couples the redox reaction to proton translocation (for every two electrons transferred, four hydrogen ions are translocated across the cytoplasmic membrane), and thus conserves the redox energy in a proton gradient. This Ehrlichia ruminantium (strain Gardel) protein is NADH-quinone oxidoreductase subunit I.